Here is a 387-residue protein sequence, read N- to C-terminus: Cysteine desulfurase IscS (387 aa).

Pyridoxal 5'-phosphate contacts are provided by residues 73 to 74 (AT), Asn155, Gln183, and 203 to 205 (SAH). Lys206 is subject to N6-(pyridoxal phosphate)lysine. Residue Thr241 coordinates pyridoxal 5'-phosphate. Cys328 serves as the catalytic Cysteine persulfide intermediate. Cys328 serves as a coordination point for [2Fe-2S] cluster.

This sequence belongs to the class-V pyridoxal-phosphate-dependent aminotransferase family. NifS/IscS subfamily. Homodimer. Forms a heterotetramer with IscU, interacts with other sulfur acceptors. Pyridoxal 5'-phosphate is required as a cofactor.

The protein resides in the cytoplasm. It catalyses the reaction (sulfur carrier)-H + L-cysteine = (sulfur carrier)-SH + L-alanine. The protein operates within cofactor biosynthesis; iron-sulfur cluster biosynthesis. In terms of biological role, master enzyme that delivers sulfur to a number of partners involved in Fe-S cluster assembly, tRNA modification or cofactor biosynthesis. Catalyzes the removal of elemental sulfur atoms from cysteine to produce alanine. Functions as a sulfur delivery protein for Fe-S cluster synthesis onto IscU, an Fe-S scaffold assembly protein, as well as other S acceptor proteins. The sequence is that of Cysteine desulfurase IscS from Helicobacter pylori (strain Shi470).